A 205-amino-acid polypeptide reads, in one-letter code: Protein-L-isoaspartate O-methyltransferase (205 aa).

S56 is an active-site residue.

It belongs to the methyltransferase superfamily. L-isoaspartyl/D-aspartyl protein methyltransferase family.

Its subcellular location is the cytoplasm. It catalyses the reaction [protein]-L-isoaspartate + S-adenosyl-L-methionine = [protein]-L-isoaspartate alpha-methyl ester + S-adenosyl-L-homocysteine. Functionally, catalyzes the methyl esterification of L-isoaspartyl residues in peptides and proteins that result from spontaneous decomposition of normal L-aspartyl and L-asparaginyl residues. It plays a role in the repair and/or degradation of damaged proteins. The sequence is that of Protein-L-isoaspartate O-methyltransferase from Aeromonas hydrophila subsp. hydrophila (strain ATCC 7966 / DSM 30187 / BCRC 13018 / CCUG 14551 / JCM 1027 / KCTC 2358 / NCIMB 9240 / NCTC 8049).